We begin with the raw amino-acid sequence, 285 residues long: Bifunctional protein FolD (285 aa).

NADP(+)-binding positions include 166-168 (GAS) and isoleucine 232.

This sequence belongs to the tetrahydrofolate dehydrogenase/cyclohydrolase family. In terms of assembly, homodimer.

It catalyses the reaction (6R)-5,10-methylene-5,6,7,8-tetrahydrofolate + NADP(+) = (6R)-5,10-methenyltetrahydrofolate + NADPH. It carries out the reaction (6R)-5,10-methenyltetrahydrofolate + H2O = (6R)-10-formyltetrahydrofolate + H(+). The protein operates within one-carbon metabolism; tetrahydrofolate interconversion. Its function is as follows. Catalyzes the oxidation of 5,10-methylenetetrahydrofolate to 5,10-methenyltetrahydrofolate and then the hydrolysis of 5,10-methenyltetrahydrofolate to 10-formyltetrahydrofolate. This Psychromonas ingrahamii (strain DSM 17664 / CCUG 51855 / 37) protein is Bifunctional protein FolD.